Here is a 422-residue protein sequence, read N- to C-terminus: Serine--tRNA ligase (422 aa).

229 to 231 (TAE) is an L-serine binding site. Residue 260–262 (RKE) coordinates ATP. L-serine is bound at residue E283. 347–350 (EISS) contributes to the ATP binding site. Residue S383 coordinates L-serine.

It belongs to the class-II aminoacyl-tRNA synthetase family. Type-1 seryl-tRNA synthetase subfamily. As to quaternary structure, homodimer. The tRNA molecule binds across the dimer.

The protein localises to the cytoplasm. The catalysed reaction is tRNA(Ser) + L-serine + ATP = L-seryl-tRNA(Ser) + AMP + diphosphate + H(+). It catalyses the reaction tRNA(Sec) + L-serine + ATP = L-seryl-tRNA(Sec) + AMP + diphosphate + H(+). The protein operates within aminoacyl-tRNA biosynthesis; selenocysteinyl-tRNA(Sec) biosynthesis; L-seryl-tRNA(Sec) from L-serine and tRNA(Sec): step 1/1. Catalyzes the attachment of serine to tRNA(Ser). Is also able to aminoacylate tRNA(Sec) with serine, to form the misacylated tRNA L-seryl-tRNA(Sec), which will be further converted into selenocysteinyl-tRNA(Sec). The chain is Serine--tRNA ligase from Geobacter sp. (strain M21).